The primary structure comprises 238 residues: MKLSLLSLATLASAASLQRRSDFCGQWDTATAGDFTLYNDLWGESAGTGSQCTGVDSYSGDTIAWHTSWSWSGGSSSVKSYVNAALTFTPTQLNCISSIPTTWKWSYSGSSIVADVAYDTFLAETASGSSKYEIMVWLAALGGAGPISSTGSTIATPTIAGVNWKLYSGPNGDTTVYSFVADSTTESFSGDLNDFFTYLVDNEGVSDELYLTTLEAGTEPFTGSNAKLTVSEYSISIE.

Positions 1 to 14 are cleaved as a signal peptide; it reads MKLSLLSLATLASA.

This sequence belongs to the glycosyl hydrolase 12 (cellulase H) family.

It is found in the secreted. The catalysed reaction is xyloglucan + H2O = xyloglucan oligosaccharides.. Functionally, catalyzes endohydrolysis of 1,4-beta-D-glucosidic linkages in xyloglucan with retention of the beta-configuration of the glycosyl residues. Specific for xyloglucan and does not hydrolyze other cell wall components. This is Xyloglucan-specific endo-beta-1,4-glucanase A (xgeA) from Aspergillus aculeatus.